We begin with the raw amino-acid sequence, 411 residues long: LL-diaminopimelate aminotransferase (411 aa).

Positions 15 and 42 each coordinate substrate. Pyridoxal 5'-phosphate-binding positions include Y72, 108–109 (SK), Y132, N187, Y218, and 246–248 (SFS). Positions 109, 132, and 187 each coordinate substrate. The residue at position 249 (K249) is an N6-(pyridoxal phosphate)lysine. Positions 257 and 292 each coordinate pyridoxal 5'-phosphate. N292 and R388 together coordinate substrate.

The protein belongs to the class-I pyridoxal-phosphate-dependent aminotransferase family. LL-diaminopimelate aminotransferase subfamily. In terms of assembly, homodimer. Pyridoxal 5'-phosphate serves as cofactor.

The catalysed reaction is (2S,6S)-2,6-diaminopimelate + 2-oxoglutarate = (S)-2,3,4,5-tetrahydrodipicolinate + L-glutamate + H2O + H(+). It functions in the pathway amino-acid biosynthesis; L-lysine biosynthesis via DAP pathway; LL-2,6-diaminopimelate from (S)-tetrahydrodipicolinate (aminotransferase route): step 1/1. Involved in the synthesis of meso-diaminopimelate (m-DAP or DL-DAP), required for both lysine and peptidoglycan biosynthesis. Catalyzes the direct conversion of tetrahydrodipicolinate to LL-diaminopimelate. The protein is LL-diaminopimelate aminotransferase of Trichodesmium erythraeum (strain IMS101).